A 54-amino-acid polypeptide reads, in one-letter code: Lectin alpha-1 chain (54 aa).

Belongs to the leguminous lectin family. Tetramer of two alpha and two beta chains.

The chain is Lectin alpha-1 chain from Lathyrus cicera (Flat-pod pea).